The primary structure comprises 346 residues: Uroporphyrinogen decarboxylase (346 aa).

Substrate-binding positions include 26 to 30 (RQAGR), D76, Y153, S208, and H323.

The protein belongs to the uroporphyrinogen decarboxylase family. Homodimer.

It is found in the cytoplasm. The catalysed reaction is uroporphyrinogen III + 4 H(+) = coproporphyrinogen III + 4 CO2. It functions in the pathway porphyrin-containing compound metabolism; protoporphyrin-IX biosynthesis; coproporphyrinogen-III from 5-aminolevulinate: step 4/4. In terms of biological role, catalyzes the decarboxylation of four acetate groups of uroporphyrinogen-III to yield coproporphyrinogen-III. In Prochlorococcus marinus (strain MIT 9301), this protein is Uroporphyrinogen decarboxylase.